The following is a 309-amino-acid chain: Malate dehydrogenase (309 aa).

Residues 10 to 15 and Asp-34 each bind NAD(+); that span reads GAGNVG. Residues Arg-83 and Arg-89 each coordinate substrate. Residues Asn-96 and 119–121 each bind NAD(+); that span reads VTN. The substrate site is built by Asn-121 and Arg-152. Residue His-176 is the Proton acceptor of the active site.

Belongs to the LDH/MDH superfamily. MDH type 3 family.

The enzyme catalyses (S)-malate + NAD(+) = oxaloacetate + NADH + H(+). Catalyzes the reversible oxidation of malate to oxaloacetate. The chain is Malate dehydrogenase from Desulforudis audaxviator (strain MP104C).